Reading from the N-terminus, the 61-residue chain is Small ribosomal subunit protein uS14B (61 aa).

Zn(2+) is bound by residues Cys24, Cys27, Cys40, and Cys43.

Belongs to the universal ribosomal protein uS14 family. Zinc-binding uS14 subfamily. As to quaternary structure, part of the 30S ribosomal subunit. Contacts proteins S3 and S10. The cofactor is Zn(2+).

Binds 16S rRNA, required for the assembly of 30S particles and may also be responsible for determining the conformation of the 16S rRNA at the A site. In Streptococcus pyogenes serotype M6 (strain ATCC BAA-946 / MGAS10394), this protein is Small ribosomal subunit protein uS14B.